Here is a 763-residue protein sequence, read N- to C-terminus: Phosphoglycerol transferase I (763 aa).

The next 4 helical transmembrane spans lie at 4–19, 26–48, 76–98, and 105–127; these read LLSF…IYAW, WWFA…LFAS, YILP…GWIL, and PHHF…ASPA.

The protein belongs to the OpgB family.

It is found in the cell inner membrane. It catalyses the reaction a phosphatidylglycerol + a membrane-derived-oligosaccharide D-glucose = a 1,2-diacyl-sn-glycerol + a membrane-derived-oligosaccharide 6-(glycerophospho)-D-glucose.. It participates in glycan metabolism; osmoregulated periplasmic glucan (OPG) biosynthesis. In terms of biological role, transfers a phosphoglycerol residue from phosphatidylglycerol to the membrane-bound nascent glucan backbones. The chain is Phosphoglycerol transferase I from Shigella flexneri.